The sequence spans 170 residues: Translationally-controlled tumor protein homolog (170 aa).

Residues 1–170 enclose the TCTP domain; the sequence is MIIYKDLLSG…FKDGLEIEKC (170 aa).

The protein belongs to the TCTP family.

It localises to the cytoplasm. Functionally, involved in calcium binding and microtubule stabilization. This is Translationally-controlled tumor protein homolog (tpt1) from Scophthalmus maximus (Turbot).